The primary structure comprises 538 residues: Bifunctional purine biosynthesis protein PurH (538 aa).

An MGS-like domain is found at 6–158 (KHIPAPDLHR…KNHAYVATVV (153 aa)).

Belongs to the PurH family.

It catalyses the reaction (6R)-10-formyltetrahydrofolate + 5-amino-1-(5-phospho-beta-D-ribosyl)imidazole-4-carboxamide = 5-formamido-1-(5-phospho-D-ribosyl)imidazole-4-carboxamide + (6S)-5,6,7,8-tetrahydrofolate. The catalysed reaction is IMP + H2O = 5-formamido-1-(5-phospho-D-ribosyl)imidazole-4-carboxamide. Its pathway is purine metabolism; IMP biosynthesis via de novo pathway; 5-formamido-1-(5-phospho-D-ribosyl)imidazole-4-carboxamide from 5-amino-1-(5-phospho-D-ribosyl)imidazole-4-carboxamide (10-formyl THF route): step 1/1. It participates in purine metabolism; IMP biosynthesis via de novo pathway; IMP from 5-formamido-1-(5-phospho-D-ribosyl)imidazole-4-carboxamide: step 1/1. The sequence is that of Bifunctional purine biosynthesis protein PurH from Brucella anthropi (strain ATCC 49188 / DSM 6882 / CCUG 24695 / JCM 21032 / LMG 3331 / NBRC 15819 / NCTC 12168 / Alc 37) (Ochrobactrum anthropi).